We begin with the raw amino-acid sequence, 334 residues long: Large ribosomal subunit protein uL3 (334 aa).

Residues 1–10 show a composition bias toward basic residues; it reads MGMKKSRPRR. The disordered stretch occupies residues 1-20; sequence MGMKKSRPRRGSLAFSPRKR.

This sequence belongs to the universal ribosomal protein uL3 family. In terms of assembly, part of the 50S ribosomal subunit. Forms a cluster with proteins L14 and L24e.

Functionally, one of the primary rRNA binding proteins, it binds directly near the 3'-end of the 23S rRNA, where it nucleates assembly of the 50S subunit. This is Large ribosomal subunit protein uL3 from Methanococcus maripaludis (strain C7 / ATCC BAA-1331).